Consider the following 751-residue polypeptide: Catalase-peroxidase (751 aa).

Residues 1 to 24 (MADKCPFHNQAPKPNVAGSGTQNR) are disordered. Positions 95-241 (WHSAGTYRTF…LAAAHMGLIY (147 aa)) form a cross-link, tryptophyl-tyrosyl-methioninium (Trp-Tyr) (with M-267). His-96 (proton acceptor) is an active-site residue. The tryptophyl-tyrosyl-methioninium (Tyr-Met) (with W-95) cross-link spans 241-267 (YVNPEGPDGNPDPVAAARDIRTTFARM). A heme b-binding site is contributed by His-282.

Belongs to the peroxidase family. Peroxidase/catalase subfamily. As to quaternary structure, homodimer or homotetramer. It depends on heme b as a cofactor. Formation of the three residue Trp-Tyr-Met cross-link is important for the catalase, but not the peroxidase activity of the enzyme.

It localises to the cytoplasm. The catalysed reaction is H2O2 + AH2 = A + 2 H2O. The enzyme catalyses 2 H2O2 = O2 + 2 H2O. Bifunctional enzyme with both catalase and broad-spectrum peroxidase activity. The polypeptide is Catalase-peroxidase (Aspergillus oryzae (strain ATCC 42149 / RIB 40) (Yellow koji mold)).